The sequence spans 1197 residues: DNA-directed RNA polymerase subunit beta (1197 aa).

The segment covering 1172–1185 has biased composition (basic and acidic residues); it reads KEQEEKKAQQEAEK. Positions 1172-1197 are disordered; sequence KEQEEKKAQQEAEKAQAASAEDPSAE. Positions 1186–1197 are enriched in low complexity; the sequence is AQAASAEDPSAE.

It belongs to the RNA polymerase beta chain family. As to quaternary structure, the RNAP catalytic core consists of 2 alpha, 1 beta, 1 beta' and 1 omega subunit. When a sigma factor is associated with the core the holoenzyme is formed, which can initiate transcription.

The enzyme catalyses RNA(n) + a ribonucleoside 5'-triphosphate = RNA(n+1) + diphosphate. In terms of biological role, DNA-dependent RNA polymerase catalyzes the transcription of DNA into RNA using the four ribonucleoside triphosphates as substrates. The sequence is that of DNA-directed RNA polymerase subunit beta from Latilactobacillus sakei subsp. sakei (strain 23K) (Lactobacillus sakei subsp. sakei).